The sequence spans 94 residues: Integration host factor subunit beta (94 aa).

The protein belongs to the bacterial histone-like protein family. Heterodimer of an alpha and a beta chain.

In terms of biological role, this protein is one of the two subunits of integration host factor, a specific DNA-binding protein that functions in genetic recombination as well as in transcriptional and translational control. In Chelativorans sp. (strain BNC1), this protein is Integration host factor subunit beta.